The primary structure comprises 288 residues: MQPTLAPAPHPSMQTSAQDHADQVLHDQLLAAHQHLSHPQQARPPPPPPQPPHMQPTTPVARDQNNIDPAISGGAMLAGPQTPQPDLSGQESPKTYGKRPLSTSKRAAQNRAAQRAFRQRKEAHIRDLEGKVKAYETMGEAIKALQAENYQLREYIINLQSRLLDTQGEVPELPGNIDLSQPRGDIPVPAPPTSGTSTSAVPVPPPTAPQQPQPAQNQASAPNDDMNSLNRIAVAGLGMRKPPTEEANYLGNSFQQQARRVRPDDGQPDASELTLPKQEPTHGLPLIS.

Over residues 1 to 10 (MQPTLAPAPH) the composition is skewed to pro residues. The interval 1 to 121 (MQPTLAPAPH…AAQRAFRQRK (121 aa)) is disordered. The segment covering 26–41 (HDQLLAAHQHLSHPQQ) has biased composition (low complexity). Residues 42-54 (ARPPPPPPQPPHM) are compositionally biased toward pro residues. Polar residues predominate over residues 84-93 (QPDLSGQESP). Residues 100–163 (PLSTSKRAAQ…EYIINLQSRL (64 aa)) enclose the bZIP domain. Positions 101–124 (LSTSKRAAQNRAAQRAFRQRKEAH) are basic motif. A compositionally biased stretch (low complexity) spans 106-116 (RAAQNRAAQRA). Positions 128–159 (LEGKVKAYETMGEAIKALQAENYQLREYIINL) are leucine-zipper. Disordered regions lie at residues 172-226 (ELPG…NDDM) and 242-288 (PPTE…PLIS). The span at 202-212 (PVPPPTAPQQP) shows a compositional bias: pro residues. The segment covering 213–222 (QPAQNQASAP) has biased composition (low complexity).

The protein belongs to the bZIP family.

It is found in the nucleus. In terms of biological role, putative transcription factor. In Aspergillus clavatus (strain ATCC 1007 / CBS 513.65 / DSM 816 / NCTC 3887 / NRRL 1 / QM 1276 / 107), this protein is Putative transcription factor kapC (kapC).